We begin with the raw amino-acid sequence, 635 residues long: Phosphatidylserine decarboxylase proenzyme 3 (635 aa).

A disordered region spans residues 1-42; it reads MGNGNSTETKESRRSKMRKKIQNFRSRRRLSRPGSGSVSGLA. A lipid anchor (N-myristoyl glycine) is attached at G2. Positions 15–31 are enriched in basic residues; sequence SKMRKKIQNFRSRRRLS. A C2 domain is found at 22-147; it reads QNFRSRRRLS…VVQEPDSTCK (126 aa). 2 EF-hand domains span residues 180–210 and 211–246; these read AKRILSIVDYDEDGKLSFSEFSDLMNAFGNV and VAANKKEELFKAADLNGDGVVTIDELAALLAVQQEQ. Residues D188, D190, D192, K194, E199, D224, N226, D228, and E235 each coordinate Ca(2+). Active-site charge relay system; for autoendoproteolytic cleavage activity residues include D442, H498, and S586. The Schiff-base intermediate with substrate; via pyruvic acid; for decarboxylase activity role is filled by S586. S586 bears the Pyruvic acid (Ser); by autocatalysis mark.

This sequence belongs to the phosphatidylserine decarboxylase family. PSD-B subfamily. Eukaryotic type II sub-subfamily. As to quaternary structure, heterodimer of a large membrane-associated beta subunit and a small pyruvoyl-containing alpha subunit. The cofactor is pyruvate. In terms of processing, is synthesized initially as an inactive proenzyme. Formation of the active enzyme involves a self-maturation process in which the active site pyruvoyl group is generated from an internal serine residue via an autocatalytic post-translational modification. Two non-identical subunits are generated from the proenzyme in this reaction, and the pyruvate is formed at the N-terminus of the alpha chain, which is derived from the carboxyl end of the proenzyme. The autoendoproteolytic cleavage occurs by a canonical serine protease mechanism, in which the side chain hydroxyl group of the serine supplies its oxygen atom to form the C-terminus of the beta chain, while the remainder of the serine residue undergoes an oxidative deamination to produce ammonia and the pyruvoyl prosthetic group on the alpha chain. During this reaction, the Ser that is part of the protease active site of the proenzyme becomes the pyruvoyl prosthetic group, which constitutes an essential element of the active site of the mature decarboxylase. Expressed in roots, leaves, stems and flowers.

Its subcellular location is the endoplasmic reticulum membrane. The enzyme catalyses a 1,2-diacyl-sn-glycero-3-phospho-L-serine + H(+) = a 1,2-diacyl-sn-glycero-3-phosphoethanolamine + CO2. The protein operates within phospholipid metabolism; phosphatidylethanolamine biosynthesis; phosphatidylethanolamine from CDP-diacylglycerol: step 2/2. Its function is as follows. Catalyzes the formation of phosphatidylethanolamine (PtdEtn) from phosphatidylserine (PtdSer). Plays a central role in phospholipid metabolism and in the interorganelle trafficking of phosphatidylserine. Contributes only to a minor proportion of PtdEtn production. The polypeptide is Phosphatidylserine decarboxylase proenzyme 3 (PSD3) (Arabidopsis thaliana (Mouse-ear cress)).